Reading from the N-terminus, the 278-residue chain is UPF0761 membrane protein CBU_1578 (278 aa).

7 consecutive transmembrane segments (helical) span residues 38–58 (LLAL…VPAF), 68–88 (LIWE…LSQL), 92–112 (VTGL…LLMY), 134–154 (FLIY…VMLL), 177–197 (LLFV…NWVL), 207–227 (AVIG…AFTV), and 244–264 (VIPI…LGAV).

It belongs to the UPF0761 family.

The protein localises to the cell inner membrane. This is UPF0761 membrane protein CBU_1578 from Coxiella burnetii (strain RSA 493 / Nine Mile phase I).